A 286-amino-acid polypeptide reads, in one-letter code: NAD kinase (286 aa).

Aspartate 74 acts as the Proton acceptor in catalysis. NAD(+)-binding positions include 74–75 (DG), 148–149 (ND), aspartate 178, alanine 186, 189–194 (TAYNLS), and glutamine 244.

The protein belongs to the NAD kinase family. Requires a divalent metal cation as cofactor.

It localises to the cytoplasm. The catalysed reaction is NAD(+) + ATP = ADP + NADP(+) + H(+). Involved in the regulation of the intracellular balance of NAD and NADP, and is a key enzyme in the biosynthesis of NADP. Catalyzes specifically the phosphorylation on 2'-hydroxyl of the adenosine moiety of NAD to yield NADP. The polypeptide is NAD kinase (Campylobacter jejuni subsp. doylei (strain ATCC BAA-1458 / RM4099 / 269.97)).